Reading from the N-terminus, the 397-residue chain is Riboflavin biosynthesis protein RibBA (397 aa).

A DHBP synthase region spans residues 1-199; the sequence is MFHRIEEALE…IEDLIAYRRH (199 aa). D-ribulose 5-phosphate is bound by residues 26–27, D31, 138–142, and E162; these read RE and RAGHT. Position 27 (E27) interacts with Mg(2+). H141 contributes to the Mg(2+) binding site. The segment at 200–397 is GTP cyclohydrolase II; the sequence is HETLVTREVE…VNKLGHLLNL (198 aa). 250–254 is a GTP binding site; it reads RVHSE. Positions 255, 266, and 268 each coordinate Zn(2+). Residues Q271, 293 to 295, and T315 each bind GTP; that span reads EGR. The active-site Proton acceptor; for GTP cyclohydrolase activity is the D327. The Nucleophile; for GTP cyclohydrolase activity role is filled by R329. The GTP site is built by T350 and K355.

This sequence in the N-terminal section; belongs to the DHBP synthase family. It in the C-terminal section; belongs to the GTP cyclohydrolase II family. Mg(2+) serves as cofactor. It depends on Mn(2+) as a cofactor. Requires Zn(2+) as cofactor.

It carries out the reaction D-ribulose 5-phosphate = (2S)-2-hydroxy-3-oxobutyl phosphate + formate + H(+). The catalysed reaction is GTP + 4 H2O = 2,5-diamino-6-hydroxy-4-(5-phosphoribosylamino)-pyrimidine + formate + 2 phosphate + 3 H(+). Its pathway is cofactor biosynthesis; riboflavin biosynthesis; 2-hydroxy-3-oxobutyl phosphate from D-ribulose 5-phosphate: step 1/1. It participates in cofactor biosynthesis; riboflavin biosynthesis; 5-amino-6-(D-ribitylamino)uracil from GTP: step 1/4. In terms of biological role, catalyzes the conversion of D-ribulose 5-phosphate to formate and 3,4-dihydroxy-2-butanone 4-phosphate. Functionally, catalyzes the conversion of GTP to 2,5-diamino-6-ribosylamino-4(3H)-pyrimidinone 5'-phosphate (DARP), formate and pyrophosphate. This Bacillus cereus (strain G9842) protein is Riboflavin biosynthesis protein RibBA.